The chain runs to 958 residues: Glycine dehydrogenase (decarboxylating) (958 aa).

K703 carries the N6-(pyridoxal phosphate)lysine modification.

It belongs to the GcvP family. The glycine cleavage system is composed of four proteins: P, T, L and H. The cofactor is pyridoxal 5'-phosphate.

The enzyme catalyses N(6)-[(R)-lipoyl]-L-lysyl-[glycine-cleavage complex H protein] + glycine + H(+) = N(6)-[(R)-S(8)-aminomethyldihydrolipoyl]-L-lysyl-[glycine-cleavage complex H protein] + CO2. Its function is as follows. The glycine cleavage system catalyzes the degradation of glycine. The P protein binds the alpha-amino group of glycine through its pyridoxal phosphate cofactor; CO(2) is released and the remaining methylamine moiety is then transferred to the lipoamide cofactor of the H protein. This chain is Glycine dehydrogenase (decarboxylating), found in Nitrobacter hamburgensis (strain DSM 10229 / NCIMB 13809 / X14).